A 518-amino-acid chain; its full sequence is 2-isopropylmalate synthase (518 aa).

The Pyruvate carboxyltransferase domain occupies 4–266; it reads INVFDTTLRD…DSSLNLHELK (263 aa). 4 residues coordinate Mn(2+): aspartate 13, histidine 201, histidine 203, and asparagine 237. The interval 391–518 is regulatory domain; it reads EFLSLQVHYG…GLKRQTAVGS (128 aa).

Belongs to the alpha-IPM synthase/homocitrate synthase family. LeuA type 1 subfamily. In terms of assembly, homodimer. Mn(2+) serves as cofactor.

It is found in the cytoplasm. The catalysed reaction is 3-methyl-2-oxobutanoate + acetyl-CoA + H2O = (2S)-2-isopropylmalate + CoA + H(+). It functions in the pathway amino-acid biosynthesis; L-leucine biosynthesis; L-leucine from 3-methyl-2-oxobutanoate: step 1/4. Its function is as follows. Catalyzes the condensation of the acetyl group of acetyl-CoA with 3-methyl-2-oxobutanoate (2-ketoisovalerate) to form 3-carboxy-3-hydroxy-4-methylpentanoate (2-isopropylmalate). This Bacillus velezensis (strain DSM 23117 / BGSC 10A6 / LMG 26770 / FZB42) (Bacillus amyloliquefaciens subsp. plantarum) protein is 2-isopropylmalate synthase.